Consider the following 265-residue polypeptide: Metallo-beta-lactamase VIM-7 (265 aa).

The signal sequence occupies residues 1-17 (MFQIRSFLVGISAFVMA). Zn(2+) contacts are provided by histidine 113, histidine 115, aspartate 117, histidine 178, cysteine 197, and histidine 239.

Belongs to the metallo-beta-lactamase superfamily. Class-B beta-lactamase family. Monomer. The cofactor is Zn(2+).

The protein localises to the periplasm. It carries out the reaction a beta-lactam + H2O = a substituted beta-amino acid. In terms of biological role, class B beta-lactamase which confers resistance to the beta-lactam antibiotics, including penicillins, cephalosporins and carbapenems. Acts via hydrolysis of the beta-lactam ring. Has penicillin-, cephalosporin- and carbapenem-hydrolyzing activities. In Pseudomonas aeruginosa, this protein is Metallo-beta-lactamase VIM-7.